The following is a 207-amino-acid chain: Guanylate kinase (207 aa).

Residues 4-184 form the Guanylate kinase-like domain; the sequence is GTLYIVSAPS…AQMDFRSIIR (181 aa). 11–18 lines the ATP pocket; sequence APSGAGKS.

This sequence belongs to the guanylate kinase family.

It is found in the cytoplasm. The enzyme catalyses GMP + ATP = GDP + ADP. In terms of biological role, essential for recycling GMP and indirectly, cGMP. The polypeptide is Guanylate kinase (Aliivibrio fischeri (strain ATCC 700601 / ES114) (Vibrio fischeri)).